Reading from the N-terminus, the 913-residue chain is DNA mismatch repair protein MutS (913 aa).

Position 720-727 (720-727 (GPNASGKS)) interacts with ATP.

This sequence belongs to the DNA mismatch repair MutS family.

In terms of biological role, this protein is involved in the repair of mismatches in DNA. It is possible that it carries out the mismatch recognition step. This protein has a weak ATPase activity. This chain is DNA mismatch repair protein MutS, found in Prochlorococcus marinus (strain MIT 9312).